The chain runs to 23 residues: Basic phospholipase A2 Smb-N6 (23 aa).

This sequence belongs to the phospholipase A2 family. Group II subfamily. Ca(2+) is required as a cofactor. In terms of processing, contains 7 disulfide bonds. Expressed by the venom gland.

The protein localises to the secreted. It catalyses the reaction a 1,2-diacyl-sn-glycero-3-phosphocholine + H2O = a 1-acyl-sn-glycero-3-phosphocholine + a fatty acid + H(+). Functionally, snake venom phospholipase A2 (PLA2) that shows myotoxic activities. PLA2 catalyzes the calcium-dependent hydrolysis of the 2-acyl groups in 3-sn-phosphoglycerides. In Sistrurus miliarius barbouri (Dusky pigmy rattlesnake), this protein is Basic phospholipase A2 Smb-N6.